A 123-amino-acid polypeptide reads, in one-letter code: UPF0738 protein Bcer98_0913 (123 aa).

It belongs to the UPF0738 family.

The protein is UPF0738 protein Bcer98_0913 of Bacillus cytotoxicus (strain DSM 22905 / CIP 110041 / 391-98 / NVH 391-98).